The primary structure comprises 462 residues: Glycine--tRNA ligase (462 aa).

Positions 100 and 174 each coordinate substrate. Residues 206–208 (RNE), 216–221 (FRTREF), 290–291 (EL), and 334–337 (GADR) contribute to the ATP site. Residue 221-225 (FEQME) coordinates substrate. Residue 330 to 334 (EPSLG) coordinates substrate.

This sequence belongs to the class-II aminoacyl-tRNA synthetase family. As to quaternary structure, homodimer.

Its subcellular location is the cytoplasm. The catalysed reaction is tRNA(Gly) + glycine + ATP = glycyl-tRNA(Gly) + AMP + diphosphate. In terms of biological role, catalyzes the attachment of glycine to tRNA(Gly). The protein is Glycine--tRNA ligase of Alkaliphilus metalliredigens (strain QYMF).